The primary structure comprises 494 residues: Ketol-acid reductoisomerase (NADP(+)) (494 aa).

The KARI N-terminal Rossmann domain occupies 14–208; sequence LDQIGRCRFM…GGDRAGVLES (195 aa). NADP(+)-binding positions include 45 to 48, arginine 68, arginine 76, serine 78, and 108 to 110; these read CGAQ and DKQ. Histidine 132 is a catalytic residue. Position 158 (glycine 158) interacts with NADP(+). 2 KARI C-terminal knotted domains span residues 209–344 and 345–487; these read SFVA…NAPE and YNGK…MTDM. Positions 217, 221, 389, and 393 each coordinate Mg(2+). Serine 414 lines the substrate pocket.

This sequence belongs to the ketol-acid reductoisomerase family. Mg(2+) is required as a cofactor.

It carries out the reaction (2R)-2,3-dihydroxy-3-methylbutanoate + NADP(+) = (2S)-2-acetolactate + NADPH + H(+). It catalyses the reaction (2R,3R)-2,3-dihydroxy-3-methylpentanoate + NADP(+) = (S)-2-ethyl-2-hydroxy-3-oxobutanoate + NADPH + H(+). The protein operates within amino-acid biosynthesis; L-isoleucine biosynthesis; L-isoleucine from 2-oxobutanoate: step 2/4. It functions in the pathway amino-acid biosynthesis; L-valine biosynthesis; L-valine from pyruvate: step 2/4. Its function is as follows. Involved in the biosynthesis of branched-chain amino acids (BCAA). Catalyzes an alkyl-migration followed by a ketol-acid reduction of (S)-2-acetolactate (S2AL) to yield (R)-2,3-dihydroxy-isovalerate. In the isomerase reaction, S2AL is rearranged via a Mg-dependent methyl migration to produce 3-hydroxy-3-methyl-2-ketobutyrate (HMKB). In the reductase reaction, this 2-ketoacid undergoes a metal-dependent reduction by NADPH to yield (R)-2,3-dihydroxy-isovalerate. The chain is Ketol-acid reductoisomerase (NADP(+)) from Pseudoalteromonas atlantica (strain T6c / ATCC BAA-1087).